A 515-amino-acid chain; its full sequence is Alpha-1B adrenergic receptor (515 aa).

Residues 1-45 (MNPDLDTGHNTSAPAHWGELKDDNFTGPNQTSSNSTLPQLDVTRA) lie on the Extracellular side of the membrane. 3 N-linked (GlcNAc...) asparagine glycosylation sites follow: Asn-10, Asn-24, and Asn-34. The helical transmembrane segment at 46-70 (ISVGLVLGAFILFAIVGNILVILSV) threads the bilayer. Topologically, residues 71–83 (ACNRHLRTPTNYF) are cytoplasmic. The chain crosses the membrane as a helical span at residues 84–105 (IVNLAIADLLLSFTVLPFSATL). The Extracellular portion of the chain corresponds to 106 to 115 (EVLGYWVLGR). The chain crosses the membrane as a helical span at residues 116–141 (IFCDIWAAVDVLCCTASILSLCAISI). Residues Cys-118 and Cys-195 are joined by a disulfide bond. Residues 142-161 (DRYIGVRYSLQYPTLVTRRK) are Cytoplasmic-facing. Residues 162-182 (AILALLSVWVLSTVISIGPLL) traverse the membrane as a helical segment. Topologically, residues 183–201 (GWKEPAPNDDKECGVTEEP) are extracellular. A helical transmembrane segment spans residues 202–224 (FYALFSSLGSFYIPLAVILVMYC). The Cytoplasmic segment spans residues 225–295 (RVYIVAKRTT…FSREKKAAKT (71 aa)). At Thr-264 the chain carries Phosphothreonine. Residues 296–319 (LGIVVGMFILCWLPFFIALPLGSL) traverse the membrane as a helical segment. Topologically, residues 320 to 326 (FSTLKPP) are extracellular. The helical transmembrane segment at 327–351 (DAVFKVVFWLGYFNSCLNPIIYPCS) threads the bilayer. The Cytoplasmic portion of the chain corresponds to 352 to 515 (SKEFKRAFMR…SNMPLAPGHF (164 aa)). Cys-365 carries the S-palmitoyl cysteine lipid modification. Positions 368 to 378 (RGGRRRRRRRR) match the Nuclear localization signal motif. Disordered stretches follow at residues 392–430 (GGSLERSQSRKDSLDDSGSCMSGTQRTLPSASPSPGYLG) and 474–515 (LGDP…PGHF). 2 stretches are compositionally biased toward polar residues: residues 410–424 (SCMSGTQRTLPSASP) and 484–498 (GDTSNGGCDTTTDLA).

This sequence belongs to the G-protein coupled receptor 1 family. Adrenergic receptor subfamily. ADRA1B sub-subfamily. As to quaternary structure, homo- and heterooligomer. Heterooligomerizes with ADRA1B homooligomers in cardiac myocytes. Interacts with CAVIN4.

The protein localises to the nucleus membrane. It localises to the cell membrane. Its subcellular location is the cytoplasm. The protein resides in the membrane. It is found in the caveola. Its function is as follows. This alpha-adrenergic receptor mediates its action by association with G proteins that activate a phosphatidylinositol-calcium second messenger system. Its effect is mediated by G(q) and G(11) proteins. Nuclear ADRA1A-ADRA1B heterooligomers regulate phenylephrine (PE)-stimulated ERK signaling in cardiac myocytes. This chain is Alpha-1B adrenergic receptor (Adra1b), found in Rattus norvegicus (Rat).